Reading from the N-terminus, the 248-residue chain is Flavodoxin/ferredoxin--NADP reductase (248 aa).

Positions 2 to 101 constitute an FAD-binding FR-type domain; the sequence is ADWVTGKVTK…SEAAGFFVLD (100 aa). FAD contacts are provided by residues 50–53, Y66, 74–76, and T116; these read RAYS and KLS. NADP(+) contacts are provided by residues 143–144, 173–174, R184, 214–216, and D220; these read AR, SR, and NPQ. Residue 247-248 participates in FAD binding; it reads YW.

Belongs to the ferredoxin--NADP reductase type 1 family. Requires FAD as cofactor.

Its subcellular location is the cytoplasm. It carries out the reaction 2 reduced [2Fe-2S]-[ferredoxin] + NADP(+) + H(+) = 2 oxidized [2Fe-2S]-[ferredoxin] + NADPH. The enzyme catalyses reduced [flavodoxin] + NADP(+) = oxidized [flavodoxin] + NADPH + 2 H(+). Functionally, transports electrons between flavodoxin or ferredoxin and NADPH. This is Flavodoxin/ferredoxin--NADP reductase (fpr) from Shigella flexneri.